The following is a 135-amino-acid chain: Interleukin-4 (135 aa).

The N-terminal stretch at 1 to 24 (MGLTSQLIPVLVCLLACTSHFVHG) is a signal peptide. 3 disulfides stabilise this stretch: Cys-27–Cys-135, Cys-48–Cys-85, and Cys-70–Cys-105. Asn-62 and Asn-96 each carry an N-linked (GlcNAc...) asparagine glycan.

This sequence belongs to the IL-4/IL-13 family.

Its subcellular location is the secreted. Functionally, participates in at least several B-cell activation processes as well as of other cell types. It is a costimulator of DNA-synthesis. It induces the expression of class II MHC molecules on resting B-cells. It enhances both secretion and cell surface expression of IgE and IgG1. It also regulates the expression of the low affinity Fc receptor for IgE (CD23) on both lymphocytes and monocytes. Positively regulates IL31RA expression in macrophages. Stimulates autophagy in dendritic cells by interfering with mTORC1 signaling and through the induction of RUFY4. The protein is Interleukin-4 (IL4) of Cervus elaphus (Red deer).